The sequence spans 975 residues: Ionotropic receptor 21a (975 aa).

A signal peptide spans 1 to 21 (MFKRIVLAVINLVFLIVSTTA). Residues Asn67, Asn177, and Asn355 are each glycosylated (N-linked (GlcNAc...) asparagine). Residues 433-453 (WPVWVAVILIYLLAIFPLAFS) traverse the membrane as a helical segment. Residue Asn464 is glycosylated (N-linked (GlcNAc...) asparagine). Residues 505–525 (IYWVFTIIITACYTGSIIAFI) traverse the membrane as a helical segment. Residues Asn561, Asn586, and Asn611 are each glycosylated (N-linked (GlcNAc...) asparagine). A helical transmembrane segment spans residues 708 to 728 (MFLLMLFGYVVALGVLISEWV). 2 disordered regions span residues 757-839 (ATAG…HSLS) and 911-938 (SPHS…RKEM). 2 stretches are compositionally biased toward polar residues: residues 760–777 (GSDN…TNRN) and 788–800 (VENS…NGSA). Residues Asn763 and Asn797 are each glycosylated (N-linked (GlcNAc...) asparagine).

The protein belongs to the glutamate-gated ion channel (TC 1.A.10.1) family. In both female and male antenna, expressed specifically in 3 sensory neurons of flagellomere 13 segment (at protein level).

The protein localises to the cell projection. It is found in the cilium membrane. Its function is as follows. Integral part of a neural sensory system in the antenna that provides the neural basis for the response to environmental changes in temperature (thermosensation). Specifically, required for thermosensing by the cooling cell. Plays a role in heat seeking and heat-stimulated blood feeding behavior. The chain is Ionotropic receptor 21a from Anopheles gambiae (African malaria mosquito).